Consider the following 1366-residue polypeptide: DNA-directed RNA polymerase subunit beta' (1366 aa).

Residues 1-20 show a composition bias toward basic residues; sequence MTSSKPKKTSRVRKTTKNSK. Residues 1–34 form a disordered region; the sequence is MTSSKPKKTSRVRKTTKNSKKNNPLTMPALAKTP. C248, C315, C322, and C325 together coordinate Zn(2+). The disordered stretch occupies residues 1291-1366; sequence YTVDMPQSPS…LQEEGLLSDE (76 aa). Polar residues predominate over residues 1295-1305; it reads MPQSPSVSSTA. The segment covering 1354-1366 has biased composition (low complexity); it reads LEGLQEEGLLSDE.

Belongs to the RNA polymerase beta' chain family. RpoC2 subfamily. In terms of assembly, in cyanobacteria the RNAP catalytic core is composed of 2 alpha, 1 beta, 1 beta', 1 gamma and 1 omega subunit. When a sigma factor is associated with the core the holoenzyme is formed, which can initiate transcription. Zn(2+) serves as cofactor.

The catalysed reaction is RNA(n) + a ribonucleoside 5'-triphosphate = RNA(n+1) + diphosphate. DNA-dependent RNA polymerase catalyzes the transcription of DNA into RNA using the four ribonucleoside triphosphates as substrates. The polypeptide is DNA-directed RNA polymerase subunit beta' (Prochlorococcus marinus (strain MIT 9301)).